A 150-amino-acid polypeptide reads, in one-letter code: uncharacterized protein (150 aa).

This is an uncharacterized protein from Mycoplasma pneumoniae (strain ATCC 29342 / M129 / Subtype 1) (Mycoplasmoides pneumoniae).